A 552-amino-acid chain; its full sequence is Chaperonin GroEL (552 aa).

Residues 30–33, Lys-51, 87–91, Gly-415, 480–482, and Asp-496 contribute to the ATP site; these read TLGP, DGTTT, and NAA.

The protein belongs to the chaperonin (HSP60) family. Forms a cylinder of 14 subunits composed of two heptameric rings stacked back-to-back. Interacts with the co-chaperonin GroES.

It is found in the cytoplasm. The catalysed reaction is ATP + H2O + a folded polypeptide = ADP + phosphate + an unfolded polypeptide.. Together with its co-chaperonin GroES, plays an essential role in assisting protein folding. The GroEL-GroES system forms a nano-cage that allows encapsulation of the non-native substrate proteins and provides a physical environment optimized to promote and accelerate protein folding. The sequence is that of Chaperonin GroEL from Coxiella burnetii (strain RSA 331 / Henzerling II).